Reading from the N-terminus, the 448-residue chain is Exodeoxyribonuclease 7 large subunit (448 aa).

The protein belongs to the XseA family. Heterooligomer composed of large and small subunits.

Its subcellular location is the cytoplasm. The protein resides in the nucleoid. The enzyme catalyses Exonucleolytic cleavage in either 5'- to 3'- or 3'- to 5'-direction to yield nucleoside 5'-phosphates.. Functionally, bidirectionally degrades single-stranded DNA into large acid-insoluble oligonucleotides, which are then degraded further into small acid-soluble oligonucleotides. This Bacillus subtilis (strain 168) protein is Exodeoxyribonuclease 7 large subunit.